We begin with the raw amino-acid sequence, 985 residues long: Alanine--tRNA ligase, mitochondrial (985 aa).

The transit peptide at 1–23 (MAASVAAAAGRLRRAIGRSCPWQ) directs the protein to the mitochondrion. ATP-binding positions include Arg105, His123, Trp205, and 235 to 237 (LWN). The L-alanine site is built by Asn237 and Asp260. Gly264 contacts ATP. Positions 632, 636, 749, and 753 each coordinate Zn(2+).

Belongs to the class-II aminoacyl-tRNA synthetase family. Monomer. Zn(2+) is required as a cofactor.

It localises to the mitochondrion. It catalyses the reaction tRNA(Ala) + L-alanine + ATP = L-alanyl-tRNA(Ala) + AMP + diphosphate. The enzyme catalyses (S)-lactate + ATP + H(+) = (S)-lactoyl-AMP + diphosphate. The catalysed reaction is (S)-lactoyl-AMP + L-lysyl-[protein] = N(6)-[(S)-lactoyl]-L-lysyl-[protein] + AMP + 2 H(+). Its function is as follows. Catalyzes the attachment of alanine to tRNA(Ala) in a two-step reaction: alanine is first activated by ATP to form Ala-AMP and then transferred to the acceptor end of tRNA(Ala). Also edits incorrectly charged tRNA(Ala) via its editing domain. In presence of high levels of lactate, also acts as a protein lactyltransferase that mediates lactylation of lysine residues in target proteins, such as CGAS. Acts as an inhibitor of cGAS/STING signaling by catalyzing lactylation of CGAS, preventing the formation of liquid-like droplets in which CGAS is activated. The chain is Alanine--tRNA ligase, mitochondrial (Aars2) from Rattus norvegicus (Rat).